The following is a 304-amino-acid chain: Putative ankyrin repeat protein R602 (304 aa).

ANK repeat units follow at residues 82-117 (LIRY…DITF), 118-146 (NDNF…DVHA), 147-176 (DNEF…DPFC), 178-206 (DNIV…DINA), 207-236 (GNNY…SIND), and 238-266 (SPND…DIST).

This chain is Putative ankyrin repeat protein R602, found in Acanthamoeba polyphaga (Amoeba).